The primary structure comprises 198 residues: Putative transposase InsO for insertion sequence element IS911B (198 aa).

The Integrase catalytic domain occupies 105-198 (AVTEPNQVWC…YCGDTGSGRV (94 aa)).

Involved in the transposition of the insertion sequence IS911B. The chain is Putative transposase InsO for insertion sequence element IS911B (insO2) from Escherichia coli (strain K12).